The chain runs to 172 residues: Adenine phosphoribosyltransferase (172 aa).

This sequence belongs to the purine/pyrimidine phosphoribosyltransferase family. In terms of assembly, homodimer.

The protein localises to the cytoplasm. It carries out the reaction AMP + diphosphate = 5-phospho-alpha-D-ribose 1-diphosphate + adenine. It participates in purine metabolism; AMP biosynthesis via salvage pathway; AMP from adenine: step 1/1. Catalyzes a salvage reaction resulting in the formation of AMP, that is energically less costly than de novo synthesis. This is Adenine phosphoribosyltransferase from Streptococcus uberis (strain ATCC BAA-854 / 0140J).